Here is a 274-residue protein sequence, read N- to C-terminus: HTH-type transcriptional regulator GadX (274 aa).

The region spanning 145–242 is the HTH araC/xylS-type domain; the sequence is TRVCTVINNN…GMTPTEYQER (98 aa). 2 consecutive DNA-binding regions (H-T-H motif) follow at residues 162-183 and 209-232; these read ARIA…REEG and IKRV…RNYY.

In terms of assembly, homodimer.

Positively regulates the expression of about fifteen genes involved in acid resistance such as gadA, gadB and gadC. Depending on the conditions (growth phase and medium), can repress gadW. This Escherichia coli O6:H1 (strain CFT073 / ATCC 700928 / UPEC) protein is HTH-type transcriptional regulator GadX (gadX).